Reading from the N-terminus, the 262-residue chain is Phosphonates import ATP-binding protein PhnC (262 aa).

Positions 5–253 (IRVEKLAKTF…RFDHLYRSIN (249 aa)) constitute an ABC transporter domain. Residue 37–44 (GPSGSGKS) coordinates ATP.

This sequence belongs to the ABC transporter superfamily. Phosphonates importer (TC 3.A.1.9.1) family. In terms of assembly, the complex is composed of two ATP-binding proteins (PhnC), two transmembrane proteins (PhnE) and a solute-binding protein (PhnD).

Its subcellular location is the cell inner membrane. The enzyme catalyses phosphonate(out) + ATP + H2O = phosphonate(in) + ADP + phosphate + H(+). Its function is as follows. Part of the ABC transporter complex PhnCDE involved in phosphonates import. Responsible for energy coupling to the transport system. The sequence is that of Phosphonates import ATP-binding protein PhnC from Shigella flexneri serotype 5b (strain 8401).